The primary structure comprises 112 residues: uncharacterized protein (112 aa).

2 N-linked (GlcNAc...) asparagine; by host glycosylation sites follow: asparagine 29 and asparagine 60. The chain crosses the membrane as a helical span at residues 66 to 86 (IFNGLGFILIVIFIYLLLITL).

It belongs to the asfivirus B117L family.

The protein resides in the host membrane. Its subcellular location is the virion. This is an uncharacterized protein from African swine fever virus (isolate Tick/South Africa/Pretoriuskop Pr4/1996) (ASFV).